The chain runs to 381 residues: uncharacterized protein (381 aa).

Disordered stretches follow at residues 1-20 and 36-381; these read MPYY…FDPT and IPPS…EDDE. Positions 9–18 are enriched in acidic residues; that stretch reads NDVDDFDEFD. 2 stretches are compositionally biased toward basic and acidic residues: residues 166–175 and 186–237; these read TEVEYGRRPE and SESE…EGYR. 3 positions are modified to phosphoserine: serine 339, serine 346, and serine 357. Residues 364–374 show a composition bias toward basic residues; that stretch reads KKHRHKHHHQK.

This is an uncharacterized protein from Arabidopsis thaliana (Mouse-ear cress).